The chain runs to 1169 residues: Phospholipid-transporting ATPase IF (1169 aa).

Over leucine 1–valine 47 the chain is Cytoplasmic. A helical transmembrane segment spans residues proline 48–valine 69. Topologically, residues glutamine 70–aspartate 74 are extracellular. The helical transmembrane segment at threonine 75–lysine 96 threads the bilayer. Residues glutamine 97–phenylalanine 281 lie on the Cytoplasmic side of the membrane. Residues leucine 282–tryptophan 303 traverse the membrane as a helical segment. Residues glutamine 304–aspartate 333 lie on the Extracellular side of the membrane. Residues phenylalanine 334–valine 351 form a helical membrane-spanning segment. Topologically, residues threonine 352–alanine 868 are cytoplasmic. The active-site 4-aspartylphosphate intermediate is aspartate 399. Residues aspartate 399, lysine 400, threonine 401, glutamate 523, phenylalanine 564, lysine 587, arginine 618, threonine 698, glycine 699, aspartate 700, arginine 786, and lysine 792 each contribute to the ATP site. Position 399 (aspartate 399) interacts with Mg(2+). A Mg(2+)-binding site is contributed by threonine 401. The tract at residues lysine 794–serine 802 is required for binding to the RING-finger of HLTF. Aspartate 813 provides a ligand contact to Mg(2+). Residues asparagine 816 and aspartate 817 each contribute to the ATP site. Residue aspartate 817 participates in Mg(2+) binding. The helical transmembrane segment at threonine 869–phenylalanine 890 threads the bilayer. Over tyrosine 891–serine 902 the chain is Extracellular. A helical transmembrane segment spans residues valine 903 to leucine 922. At leucine 923–threonine 952 the chain is on the cytoplasmic side. The helical transmembrane segment at phenylalanine 953 to leucine 974 threads the bilayer. The Extracellular segment spans residues isoleucine 975 to glycine 989. A helical membrane pass occupies residues asparagine 990–glutamate 1012. Residues threonine 1013–threonine 1017 lie on the Cytoplasmic side of the membrane. The chain crosses the membrane as a helical span at residues tryptophan 1018–glycine 1039. At glycine 1040–glutamine 1057 the chain is on the extracellular side. The chain crosses the membrane as a helical span at residues leucine 1058–lysine 1082. Residues lysine 1083–cysteine 1169 lie on the Cytoplasmic side of the membrane. At serine 1146 the chain carries Phosphoserine.

It belongs to the cation transport ATPase (P-type) (TC 3.A.3) family. Type IV subfamily. In terms of assembly, component of a P4-ATPase flippase complex which consists of a catalytic alpha subunit ATP11B and an accessory beta subunit TMEM30A. Interacts with HLTF (via the RING-finger). Mg(2+) serves as cofactor. As to expression, ubiquitously expressed.

The protein resides in the recycling endosome membrane. It localises to the early endosome. The protein localises to the endoplasmic reticulum. It is found in the golgi apparatus. Its subcellular location is the trans-Golgi network. The protein resides in the nucleus inner membrane. The catalysed reaction is ATP + H2O + phospholipidSide 1 = ADP + phosphate + phospholipidSide 2.. It carries out the reaction a 1,2-diacyl-sn-glycero-3-phospho-L-serine(out) + ATP + H2O = a 1,2-diacyl-sn-glycero-3-phospho-L-serine(in) + ADP + phosphate + H(+). It catalyses the reaction a 1,2-diacyl-sn-glycero-3-phosphoethanolamine(out) + ATP + H2O = a 1,2-diacyl-sn-glycero-3-phosphoethanolamine(in) + ADP + phosphate + H(+). Catalytic component of a P4-ATPase flippase complex which catalyzes the hydrolysis of ATP coupled to the transport of aminophospholipids, phosphatidylserines (PS) and phosphatidylethanolamines (PE), from the outer to the inner leaflet of intracellular membranes. May contribute to the maintenance of membrane lipid asymmetry in endosome compartment. Functionally, appears to play a role in the subnuclear trafficking of transcription factors with RING motifs. This chain is Phospholipid-transporting ATPase IF (ATP11B), found in Oryctolagus cuniculus (Rabbit).